The chain runs to 235 residues: Ribose-5-phosphate isomerase A (235 aa).

Residues 32–35, 89–92, and 102–105 contribute to the substrate site; these read TGST, DGAD, and KGGG. The Proton acceptor role is filled by Glu-111. Lys-129 provides a ligand contact to substrate.

The protein belongs to the ribose 5-phosphate isomerase family. As to quaternary structure, homodimer.

It catalyses the reaction aldehydo-D-ribose 5-phosphate = D-ribulose 5-phosphate. It functions in the pathway carbohydrate degradation; pentose phosphate pathway; D-ribose 5-phosphate from D-ribulose 5-phosphate (non-oxidative stage): step 1/1. Its function is as follows. Catalyzes the reversible conversion of ribose-5-phosphate to ribulose 5-phosphate. The chain is Ribose-5-phosphate isomerase A from Synechocystis sp. (strain ATCC 27184 / PCC 6803 / Kazusa).